Reading from the N-terminus, the 304-residue chain is Ribonuclease Z (304 aa).

Zn(2+) contacts are provided by histidine 63, histidine 65, aspartate 67, histidine 68, histidine 143, aspartate 213, and histidine 271. Aspartate 67 functions as the Proton acceptor in the catalytic mechanism.

Belongs to the RNase Z family. As to quaternary structure, homodimer. Zn(2+) is required as a cofactor.

It catalyses the reaction Endonucleolytic cleavage of RNA, removing extra 3' nucleotides from tRNA precursor, generating 3' termini of tRNAs. A 3'-hydroxy group is left at the tRNA terminus and a 5'-phosphoryl group is left at the trailer molecule.. Its function is as follows. Zinc phosphodiesterase, which displays some tRNA 3'-processing endonuclease activity. Probably involved in tRNA maturation, by removing a 3'-trailer from precursor tRNA. This chain is Ribonuclease Z, found in Bacteroides fragilis (strain YCH46).